We begin with the raw amino-acid sequence, 107 residues long: Phosphoribosyl-ATP pyrophosphatase (107 aa).

This sequence belongs to the PRA-PH family.

It is found in the cytoplasm. It catalyses the reaction 1-(5-phospho-beta-D-ribosyl)-ATP + H2O = 1-(5-phospho-beta-D-ribosyl)-5'-AMP + diphosphate + H(+). The protein operates within amino-acid biosynthesis; L-histidine biosynthesis; L-histidine from 5-phospho-alpha-D-ribose 1-diphosphate: step 2/9. This Agrobacterium fabrum (strain C58 / ATCC 33970) (Agrobacterium tumefaciens (strain C58)) protein is Phosphoribosyl-ATP pyrophosphatase (hisE).